A 229-amino-acid polypeptide reads, in one-letter code: MLRTKVFATTVARISGIRRYIPIRTINTVTKKNISKIEKLCEVLEVNPDGYKGKERIPTKELTKLLYTTSRNMLVRVPMTGDLSTGNTFETRNETLQKLGEQLIHLEINKMLTITFTNFNQFNIMNKNFNYIHNLDRARVVNMDSISWLIKNSLKINQLAHLRIPANLPKEMGLTSSSNDFQNLNDWKVILSFIGYLKLLEIKNDNKKFIESIIKTICIPLINYHLRKS.

A mitochondrion-targeting transit peptide spans 1-25 (MLRTKVFATTVARISGIRRYIPIRT).

It is found in the mitochondrion inner membrane. MRNA-specific translational activator of cytochrome b. The cytochrome b (COB) leader RNA may represent the target sequence for CBS1 and CBS2, tethering the COB mRNA to the inner mitochondrial membrane, where cotranslational insertion of cytochrome b into the membrane can occur. In Saccharomyces cerevisiae (strain ATCC 204508 / S288c) (Baker's yeast), this protein is Cytochrome b translational activator protein CBS1, mitochondrial (CBS1).